A 957-amino-acid chain; its full sequence is Glycine dehydrogenase (decarboxylating) (957 aa).

The residue at position 708 (Lys708) is an N6-(pyridoxal phosphate)lysine.

Belongs to the GcvP family. In terms of assembly, the glycine cleavage system is composed of four proteins: P, T, L and H. Requires pyridoxal 5'-phosphate as cofactor.

The catalysed reaction is N(6)-[(R)-lipoyl]-L-lysyl-[glycine-cleavage complex H protein] + glycine + H(+) = N(6)-[(R)-S(8)-aminomethyldihydrolipoyl]-L-lysyl-[glycine-cleavage complex H protein] + CO2. Its function is as follows. The glycine cleavage system catalyzes the degradation of glycine. The P protein binds the alpha-amino group of glycine through its pyridoxal phosphate cofactor; CO(2) is released and the remaining methylamine moiety is then transferred to the lipoamide cofactor of the H protein. This Escherichia coli O7:K1 (strain IAI39 / ExPEC) protein is Glycine dehydrogenase (decarboxylating).